Consider the following 260-residue polypeptide: Mediator of RNA polymerase II transcription subunit 8 (260 aa).

Belongs to the Mediator complex subunit 8 family. In terms of assembly, component of the Mediator complex.

The protein resides in the nucleus. Functionally, component of the Mediator complex, a coactivator involved in the regulated transcription of nearly all RNA polymerase II-dependent genes. Mediator functions as a bridge to convey information from gene-specific regulatory proteins to the basal RNA polymerase II transcription machinery. Mediator is recruited to promoters by direct interactions with regulatory proteins and serves as a scaffold for the assembly of a functional preinitiation complex with RNA polymerase II and the general transcription factors. This chain is Mediator of RNA polymerase II transcription subunit 8 (med8), found in Emericella nidulans (strain FGSC A4 / ATCC 38163 / CBS 112.46 / NRRL 194 / M139) (Aspergillus nidulans).